Reading from the N-terminus, the 344-residue chain is MASGKIIKLVVFELLEFAAFSIPTLVIMEQFATANQRTKSERTHYWLIVSCSIAYVAVVSLLIWVPVKVVLYKKRHLYKKIIGWRPVLVMCVVLTTLPSFSFSIAVTEVQKNINGSANSLPESLPDLPVSLVLLSLIVVDIIEKLRQYPLRGSQKGYEDNDICITSLQQIKTVTEQVVQSDGNPASAQAAKPTAMSQPRNHVAVLAGPLEPSFQSRILRTMSQRDVRAELFLRSFLMWADTVEMLRVAGHQAVYKSAWLYPVYIFSFISLLRMVFTPKNPLLNSLGILMQDLPFVFLRLSLILALGTITPVLGLCKNVLVTISYIYFNYVTKLRPFSAFETSPF.

The next 3 membrane-spanning stretches (helical) occupy residues 9 to 29 (LVVF…VIME), 47 to 67 (LIVS…WVPV), and 86 to 106 (PVLV…SIAV). The N-linked (GlcNAc...) asparagine glycan is linked to Asn114. 3 consecutive transmembrane segments (helical) span residues 122–142 (ESLP…VDII), 257–277 (AWLY…VFTP), and 294–314 (FVFL…VLGL).

The protein belongs to the TMEM236 family.

It is found in the membrane. The protein is Transmembrane protein 236 (Tmem236) of Mus musculus (Mouse).